Here is an 85-residue protein sequence, read N- to C-terminus: U4-theraphotoxin-Hhn1a (85 aa).

The N-terminal stretch at 1-22 (MKVTLIAILTCAAVLVLHTTAE) is a signal peptide. A propeptide spanning residues 23–48 (EELEAESQLMEVGMPDTELAAVDEER) is cleaved from the precursor. 3 cysteine pairs are disulfide-bonded: Cys-52-Cys-66, Cys-56-Cys-77, and Cys-71-Cys-82.

This sequence belongs to the neurotoxin 12 (Hwtx-2) family. 02 (Hwtx-2) subfamily. As to quaternary structure, monomer. Expressed by the venom gland.

It localises to the secreted. Its function is as follows. Neurotoxin active on both insects and mammals. In Cyriopagopus hainanus (Chinese bird spider), this protein is U4-theraphotoxin-Hhn1a.